A 364-amino-acid polypeptide reads, in one-letter code: UDP-N-acetylglucosamine--N-acetylmuramyl-(pentapeptide) pyrophosphoryl-undecaprenol N-acetylglucosamine transferase (364 aa).

Residues 10 to 12, Asn124, Arg161, Ser195, and Gln291 each bind UDP-N-acetyl-alpha-D-glucosamine; that span reads TAG.

The protein belongs to the glycosyltransferase 28 family. MurG subfamily.

It is found in the cell membrane. It carries out the reaction di-trans,octa-cis-undecaprenyl diphospho-N-acetyl-alpha-D-muramoyl-L-alanyl-D-glutamyl-meso-2,6-diaminopimeloyl-D-alanyl-D-alanine + UDP-N-acetyl-alpha-D-glucosamine = di-trans,octa-cis-undecaprenyl diphospho-[N-acetyl-alpha-D-glucosaminyl-(1-&gt;4)]-N-acetyl-alpha-D-muramoyl-L-alanyl-D-glutamyl-meso-2,6-diaminopimeloyl-D-alanyl-D-alanine + UDP + H(+). Its pathway is cell wall biogenesis; peptidoglycan biosynthesis. Functionally, cell wall formation. Catalyzes the transfer of a GlcNAc subunit on undecaprenyl-pyrophosphoryl-MurNAc-pentapeptide (lipid intermediate I) to form undecaprenyl-pyrophosphoryl-MurNAc-(pentapeptide)GlcNAc (lipid intermediate II). This is UDP-N-acetylglucosamine--N-acetylmuramyl-(pentapeptide) pyrophosphoryl-undecaprenol N-acetylglucosamine transferase from Streptomyces coelicolor (strain ATCC BAA-471 / A3(2) / M145).